The sequence spans 635 residues: UvrABC system protein C (635 aa).

The region spanning 20 to 97 is the GIY-YIG domain; that stretch reads ERSGVYRMFD…IKKFQPKFNI (78 aa). In terms of domain architecture, UVR spans 207–242; the sequence is KELQENLSKKMEELSEQMRFEEAAEIRDRIKALSYV.

The protein belongs to the UvrC family. Interacts with UvrB in an incision complex.

Its subcellular location is the cytoplasm. The UvrABC repair system catalyzes the recognition and processing of DNA lesions. UvrC both incises the 5' and 3' sides of the lesion. The N-terminal half is responsible for the 3' incision and the C-terminal half is responsible for the 5' incision. This chain is UvrABC system protein C, found in Rickettsia bellii (strain RML369-C).